Reading from the N-terminus, the 61-residue chain is Large ribosomal subunit protein uL29 (61 aa).

The protein belongs to the universal ribosomal protein uL29 family.

The chain is Large ribosomal subunit protein uL29 from Campylobacter curvus (strain 525.92).